Reading from the N-terminus, the 457-residue chain is tRNA modification GTPase MnmE (457 aa).

3 residues coordinate (6S)-5-formyl-5,6,7,8-tetrahydrofolate: arginine 25, glutamate 87, and arginine 126. Residues 223 to 377 (GISTAIIGRP…IEERINQLFF (155 aa)) form the TrmE-type G domain. Asparagine 233 contributes to the K(+) binding site. GTP contacts are provided by residues 233 to 238 (NVGKSS), 252 to 258 (TDIAGTT), and 277 to 280 (DTAG). Serine 237 lines the Mg(2+) pocket. K(+) is bound by residues threonine 252, isoleucine 254, and threonine 257. Threonine 258 serves as a coordination point for Mg(2+). Position 457 (lysine 457) interacts with (6S)-5-formyl-5,6,7,8-tetrahydrofolate.

It belongs to the TRAFAC class TrmE-Era-EngA-EngB-Septin-like GTPase superfamily. TrmE GTPase family. As to quaternary structure, homodimer. Heterotetramer of two MnmE and two MnmG subunits. The cofactor is K(+).

It localises to the cytoplasm. Exhibits a very high intrinsic GTPase hydrolysis rate. Involved in the addition of a carboxymethylaminomethyl (cmnm) group at the wobble position (U34) of certain tRNAs, forming tRNA-cmnm(5)s(2)U34. The protein is tRNA modification GTPase MnmE of Streptococcus gordonii (strain Challis / ATCC 35105 / BCRC 15272 / CH1 / DL1 / V288).